The chain runs to 730 residues: Catalase-peroxidase (730 aa).

The interval 1–21 (MTENKCPVTGKMSKATAGSGT) is disordered. Residues 95-218 (WHSAGTYRVG…LAAVQMGLIY (124 aa)) constitute a cross-link (tryptophyl-tyrosyl-methioninium (Trp-Tyr) (with M-244)). Histidine 96 acts as the Proton acceptor in catalysis. The tryptophyl-tyrosyl-methioninium (Tyr-Met) (with W-95) cross-link spans 218 to 244 (YVNPEGPNGNPDPLGSAHDVRETFARM). Histidine 259 serves as a coordination point for heme b.

Belongs to the peroxidase family. Peroxidase/catalase subfamily. Homodimer or homotetramer. The cofactor is heme b. Post-translationally, formation of the three residue Trp-Tyr-Met cross-link is important for the catalase, but not the peroxidase activity of the enzyme.

It catalyses the reaction H2O2 + AH2 = A + 2 H2O. It carries out the reaction 2 H2O2 = O2 + 2 H2O. Bifunctional enzyme with both catalase and broad-spectrum peroxidase activity. This chain is Catalase-peroxidase, found in Clostridium botulinum (strain Alaska E43 / Type E3).